Consider the following 312-residue polypeptide: Ribosomal RNA small subunit methyltransferase H (312 aa).

S-adenosyl-L-methionine is bound by residues 34-36, aspartate 54, phenylalanine 81, aspartate 102, and glutamine 109; that span reads GGH.

It belongs to the methyltransferase superfamily. RsmH family.

It is found in the cytoplasm. The catalysed reaction is cytidine(1402) in 16S rRNA + S-adenosyl-L-methionine = N(4)-methylcytidine(1402) in 16S rRNA + S-adenosyl-L-homocysteine + H(+). Its function is as follows. Specifically methylates the N4 position of cytidine in position 1402 (C1402) of 16S rRNA. The sequence is that of Ribosomal RNA small subunit methyltransferase H from Geotalea uraniireducens (strain Rf4) (Geobacter uraniireducens).